The following is a 190-amino-acid chain: dCTP deaminase, dUMP-forming (190 aa).

DCTP contacts are provided by residues 101 to 106, Asp119, 127 to 129, Gln148, Tyr162, Lys170, and Gln174; these read KSSLGR and TLE. Glu129 acts as the Proton donor/acceptor in catalysis. Residues 160-190 are disordered; the sequence is HPYGSSRAGSKYQGQRGPTPSRSYQNFIRST. Residues 171 to 190 are compositionally biased toward polar residues; sequence YQGQRGPTPSRSYQNFIRST.

This sequence belongs to the dCTP deaminase family. In terms of assembly, homotrimer.

It carries out the reaction dCTP + 2 H2O = dUMP + NH4(+) + diphosphate. It participates in pyrimidine metabolism; dUMP biosynthesis; dUMP from dCTP: step 1/1. In terms of biological role, bifunctional enzyme that catalyzes both the deamination of dCTP to dUTP and the hydrolysis of dUTP to dUMP without releasing the toxic dUTP intermediate. In Mycobacterium tuberculosis (strain ATCC 25177 / H37Ra), this protein is dCTP deaminase, dUMP-forming.